Consider the following 421-residue polypeptide: Serine hydroxymethyltransferase (421 aa).

(6S)-5,6,7,8-tetrahydrofolate-binding positions include Leu-118 and 122–124; that span reads GHL. Lys-226 bears the N6-(pyridoxal phosphate)lysine mark. Glu-242 contacts (6S)-5,6,7,8-tetrahydrofolate.

It belongs to the SHMT family. Homodimer. Pyridoxal 5'-phosphate is required as a cofactor.

The protein localises to the cytoplasm. The catalysed reaction is (6R)-5,10-methylene-5,6,7,8-tetrahydrofolate + glycine + H2O = (6S)-5,6,7,8-tetrahydrofolate + L-serine. Its pathway is one-carbon metabolism; tetrahydrofolate interconversion. It functions in the pathway amino-acid biosynthesis; glycine biosynthesis; glycine from L-serine: step 1/1. Functionally, catalyzes the reversible interconversion of serine and glycine with tetrahydrofolate (THF) serving as the one-carbon carrier. This reaction serves as the major source of one-carbon groups required for the biosynthesis of purines, thymidylate, methionine, and other important biomolecules. Also exhibits THF-independent aldolase activity toward beta-hydroxyamino acids, producing glycine and aldehydes, via a retro-aldol mechanism. The sequence is that of Serine hydroxymethyltransferase from Mycoplasmopsis synoviae (strain 53) (Mycoplasma synoviae).